Reading from the N-terminus, the 403-residue chain is Ubiquitin-like modifier-activating enzyme 5 (403 aa).

Residues Gly-81, Asp-102, Lys-125, Asn-148, and Asn-182 each contribute to the ATP site. The Zn(2+) site is built by Cys-224 and Cys-227. Cys-248 (glycyl thioester intermediate) is an active-site residue. The Zn(2+) site is built by Cys-301 and Cys-306. Residues 306-315 (CRKQQEEYKK) show a composition bias toward basic and acidic residues. The disordered stretch occupies residues 306–337 (CRKQQEEYKKRAPAQPTQETAPQEEEEVVHED). The short motif at 333–345 (VVHEDNEWGIELV) is the UFM1-interacting sequence (UIS) element. The interval 346 to 376 (SEVSEEELKNSSGPVPTLPEGITVAYTVPKK) is linker. Ser-357 and Ser-392 each carry phosphoserine. Residues 388 to 403 (DSGESLEDLMARMKKM) carry the UFC1-binding sequence (UFC) motif.

The protein belongs to the ubiquitin-activating E1 family. UBA5 subfamily. Homodimer; homodimerization is required for UFM1 activation. Interacts (via UIS motif) with UFM1; binds UFM1 via a trans-binding mechanism in which UFM1 interacts with distinct sites in both subunits of the UBA5 homodimer. Interacts (via C-terminus) with UFC1. Interacts (via UIS motif) with GABARAPL2 and, with lower affinity, with GABARAP and GABARAPL1.

The protein resides in the cytoplasm. The protein localises to the nucleus. It localises to the endoplasmic reticulum membrane. It is found in the golgi apparatus. E1-like enzyme which specifically catalyzes the first step in ufmylation. Activates UFM1 by first adenylating its C-terminal glycine residue with ATP, and thereafter linking this residue to the side chain of a cysteine residue in E1, yielding a UFM1-E1 thioester and free AMP. Activates UFM1 via a trans-binding mechanism, in which UFM1 interacts with distinct sites in both subunits of the UBA5 homodimer. Trans-binding also promotes stabilization of the UBA5 homodimer, and enhances ATP-binding. Transfer of UFM1 from UBA5 to the E2-like enzyme UFC1 also takes place using a trans mechanism. Ufmylation plays a key role in various processes, such as ribosome recycling, response to DNA damage, interferon response or reticulophagy (also called ER-phagy). Ufmylation is essential for erythroid differentiation of both megakaryocytes and erythrocytes. The polypeptide is Ubiquitin-like modifier-activating enzyme 5 (Rattus norvegicus (Rat)).